Reading from the N-terminus, the 335-residue chain is MTDHPPIDTSSYFDCYQQHQLPLQYTFTSSSNSNTSNSSTSPSHISDQFSSSGGPPYELSSHILTPSSVIPTPSPSVASASISSPTIPAFGCTMSEYSMEQMEAISTSLFQARDGDRLVAFFKQLESLYGPNAVDHLRSEAIIVAYTYALYHSNEFETLFHLLSNRHFQQRHYNDLQDIWHHARYKESQLKRGKELNPVEKYRLRRKFPAPKTIWDGEEIVYSFKDSSRKFLKQFFRNVSEYPTQEQKREISRATGLKIVQISNWFKNRRQRDKSNNSAKCSPPSSSSSTNGGSDFLPIITPQSFNLAAAPFNMNMIYGTLRDSQSDNDQFTFNP.

Disordered regions lie at residues 27 to 56 (FTSSSNSNTSNSSTSPSHISDQFSSSGGPP) and 269 to 294 (RRQRDKSNNSAKCSPPSSSSSTNGGS). Positions 28–41 (TSSSNSNTSNSSTS) are enriched in low complexity. The segment covering 42 to 53 (PSHISDQFSSSG) has biased composition (polar residues). The homeobox DNA-binding region spans 225-277 (KDSSRKFLKQFFRNVSEYPTQEQKREISRATGLKIVQISNWFKNRRQRDKSNN). Residues 276 to 294 (NNSAKCSPPSSSSSTNGGS) are compositionally biased toward low complexity.

This sequence belongs to the SIX/Sine oculis homeobox family.

It is found in the nucleus. Functionally, probable transcription factor required for differentiation and migration of neuronal cells, such as RID and CAN neurons. Specifically, plays a role in the terminal differentiation of RID peptidergic neurons. Also required for CAN neuron axon guidance. This is Homeobox protein unc-39 from Caenorhabditis elegans.